A 122-amino-acid polypeptide reads, in one-letter code: Large ribosomal subunit protein uL14 (122 aa).

The protein belongs to the universal ribosomal protein uL14 family. In terms of assembly, part of the 50S ribosomal subunit. Forms a cluster with proteins L3 and L19. In the 70S ribosome, L14 and L19 interact and together make contacts with the 16S rRNA in bridges B5 and B8.

Functionally, binds to 23S rRNA. Forms part of two intersubunit bridges in the 70S ribosome. In Wolinella succinogenes (strain ATCC 29543 / DSM 1740 / CCUG 13145 / JCM 31913 / LMG 7466 / NCTC 11488 / FDC 602W) (Vibrio succinogenes), this protein is Large ribosomal subunit protein uL14.